The chain runs to 191 residues: Xanthine phosphoribosyltransferase (191 aa).

The xanthine site is built by Leu-20 and Asn-27. 5-phospho-alpha-D-ribose 1-diphosphate is bound at residue Ala-128–Ala-132. Lys-156 provides a ligand contact to xanthine.

The protein belongs to the purine/pyrimidine phosphoribosyltransferase family. Xpt subfamily. As to quaternary structure, homodimer.

It is found in the cytoplasm. It catalyses the reaction XMP + diphosphate = xanthine + 5-phospho-alpha-D-ribose 1-diphosphate. It participates in purine metabolism; XMP biosynthesis via salvage pathway; XMP from xanthine: step 1/1. Functionally, converts the preformed base xanthine, a product of nucleic acid breakdown, to xanthosine 5'-monophosphate (XMP), so it can be reused for RNA or DNA synthesis. The chain is Xanthine phosphoribosyltransferase from Acinetobacter baumannii (strain AB307-0294).